Consider the following 268-residue polypeptide: MIQDSMMTETDPQVAKSPEVALAVRNLNFYYGENHALHDISIDFPARRVTAMIGPSGCGKSTLLRVFNRMYDLYPGQRATGEVIFDGRNVLERDLDLNILRARVGMVFQKPTPFPMSIYDNIAFGVRLHEKLNKAEMDARVQDVLTRVALWNEVRDRLNAPASGLSGGQQQRLCIARSIATRPEVLLLDEPTSALDPISTARIEELLDELKEEFTIAIVTHNMQQAARCADQVAFFYMGRLIEVDSADRMFTNPKQQQTQDYITGRFG.

The ABC transporter domain maps to 22 to 263 (LAVRNLNFYY…PKQQQTQDYI (242 aa)). An ATP-binding site is contributed by 54–61 (GPSGCGKS).

Belongs to the ABC transporter superfamily. Phosphate importer (TC 3.A.1.7) family. As to quaternary structure, the complex is composed of two ATP-binding proteins (PstB), two transmembrane proteins (PstC and PstA) and a solute-binding protein (PstS).

The protein resides in the cell inner membrane. The enzyme catalyses phosphate(out) + ATP + H2O = ADP + 2 phosphate(in) + H(+). In terms of biological role, part of the ABC transporter complex PstSACB involved in phosphate import. Responsible for energy coupling to the transport system. The chain is Phosphate import ATP-binding protein PstB from Gluconobacter oxydans (strain 621H) (Gluconobacter suboxydans).